The chain runs to 635 residues: 1-deoxy-D-xylulose-5-phosphate synthase (635 aa).

Thiamine diphosphate contacts are provided by residues H72 and G113 to A115. Residue D144 participates in Mg(2+) binding. Thiamine diphosphate contacts are provided by residues G145–A146, N174, Y286, and E369. A Mg(2+)-binding site is contributed by N174.

This sequence belongs to the transketolase family. DXPS subfamily. In terms of assembly, homodimer. The cofactor is Mg(2+). It depends on thiamine diphosphate as a cofactor.

It catalyses the reaction D-glyceraldehyde 3-phosphate + pyruvate + H(+) = 1-deoxy-D-xylulose 5-phosphate + CO2. Its pathway is metabolic intermediate biosynthesis; 1-deoxy-D-xylulose 5-phosphate biosynthesis; 1-deoxy-D-xylulose 5-phosphate from D-glyceraldehyde 3-phosphate and pyruvate: step 1/1. Its function is as follows. Catalyzes the acyloin condensation reaction between C atoms 2 and 3 of pyruvate and glyceraldehyde 3-phosphate to yield 1-deoxy-D-xylulose-5-phosphate (DXP). This chain is 1-deoxy-D-xylulose-5-phosphate synthase, found in Gloeothece citriformis (strain PCC 7424) (Cyanothece sp. (strain PCC 7424)).